The primary structure comprises 320 residues: ASGKGCLLGHDNSGYYQAKKLQGEDNTECDLEPHELKLSPLEIEVTDADGFTNGLAPGVADSHQTQGTKECGLLTAHGNNGLAKSGALDQNPKLLMGVFTVASSNSALTVADLTKAATSAIANTGLGQAHAAVKAIQDANPAANDNTSTSEDTAELQTAIMHLELQAATAGSRNMKEETKKIFTNKVQDTITKVLHNVYSHQITVPFVNNGKDTPLRSIPNTGELMEILAFYEQKVADNTAKTQKELTEAQQAMKTDRSGDGGCTQITEPTACNSKPFCSYNESTTDDDKKCKYNATKATENGVPVAQTQTGGSETTTEK.

N-linked (GlcNAc...) asparagine glycans are attached at residues asparagine 146, asparagine 282, and asparagine 295. The tract at residues 297-320 (TKATENGVPVAQTQTGGSETTTEK) is disordered. Residues 308 to 320 (QTQTGGSETTTEK) are compositionally biased toward low complexity.

The protein resides in the cell membrane. VSG forms a coat on the surface of the parasite. The trypanosome evades the immune response of the host by expressing a series of antigenically distinct VSGs from an estimated 1000 VSG genes. The chain is Variant surface glycoprotein ILTAT 1.2 from Trypanosoma brucei brucei.